The chain runs to 287 residues: Cis-prenyltransferase 7, chloroplastic (287 aa).

The transit peptide at 1–34 (MLSLGFSLPPPSDNKLIITNNNQYNYRTNLANVC) directs the protein to the chloroplast. The active site involves aspartate 61.

It belongs to the UPP synthase family. Requires Mg(2+) as cofactor. Expressed in leaf trichomes and stem trichomes.

The protein resides in the plastid. It localises to the chloroplast. Its function is as follows. Uses geranylgeranyl diphosphate to catalyze the cis-prenyl chain elongation and produce polyprenyl diphosphate with a chain of 35 carbons. This is Cis-prenyltransferase 7, chloroplastic from Solanum lycopersicum (Tomato).